The primary structure comprises 473 residues: Photosystem II CP43 reaction center protein (473 aa).

Positions 1–14 (MKTLYSLRRFYPVE) are excised as a propeptide. Thr15 is subject to N-acetylthreonine. Thr15 is subject to Phosphothreonine. 5 consecutive transmembrane segments (helical) span residues 69–93 (LFEVAHFVPEKPMYEQGLILLPHLA), 134–155 (LLGPETLEESFPFFGYVWKDRN), 178–200 (KALYFGGVYDTWAPGGGDVRKIT), 255–275 (KPFAWARRALVWSGEAYLSYS), and 291–312 (WFNNTAYPSEFYGPTGPEASQA). Glu367 provides a ligand contact to [CaMn4O5] cluster. A helical transmembrane segment spans residues 447-471 (RARAAAAGFEKGIDRDFEPVLSMTP).

Belongs to the PsbB/PsbC family. PsbC subfamily. In terms of assembly, PSII is composed of 1 copy each of membrane proteins PsbA, PsbB, PsbC, PsbD, PsbE, PsbF, PsbH, PsbI, PsbJ, PsbK, PsbL, PsbM, PsbT, PsbX, PsbY, PsbZ, Psb30/Ycf12, at least 3 peripheral proteins of the oxygen-evolving complex and a large number of cofactors. It forms dimeric complexes. Requires Binds multiple chlorophylls and provides some of the ligands for the Ca-4Mn-5O cluster of the oxygen-evolving complex. It may also provide a ligand for a Cl- that is required for oxygen evolution. PSII binds additional chlorophylls, carotenoids and specific lipids. as cofactor.

The protein localises to the plastid. It is found in the chloroplast thylakoid membrane. Its function is as follows. One of the components of the core complex of photosystem II (PSII). It binds chlorophyll and helps catalyze the primary light-induced photochemical processes of PSII. PSII is a light-driven water:plastoquinone oxidoreductase, using light energy to abstract electrons from H(2)O, generating O(2) and a proton gradient subsequently used for ATP formation. This is Photosystem II CP43 reaction center protein from Vitis vinifera (Grape).